Here is a 57-residue protein sequence, read N- to C-terminus: Protein GnsB (57 aa).

The protein belongs to the gns family.

In terms of biological role, overexpression increases levels of unsaturated fatty acids and suppresses both the temperature-sensitive fabA6 mutation and cold-sensitive secG null mutation. The polypeptide is Protein GnsB (gnsB) (Escherichia coli (strain K12)).